Consider the following 89-residue polypeptide: Small ribosomal subunit protein bS20 (89 aa).

Residues 1-29 (MTLANIKSAKKRAVQSEKRRQHNASQRSM) are disordered.

Belongs to the bacterial ribosomal protein bS20 family.

In terms of biological role, binds directly to 16S ribosomal RNA. The sequence is that of Small ribosomal subunit protein bS20 from Haemophilus influenzae (strain 86-028NP).